We begin with the raw amino-acid sequence, 363 residues long: NAD(P)H-quinone oxidoreductase subunit 1, chloroplastic (363 aa).

Helical transmembrane passes span 26–46 (FVWICVPIVVLILGITLGVLV), 96–116 (WLFALGPAIVVIPVLLSFLVI), 127–147 (ISIGMFFWIAVSSVAPVGLLV), 175–195 (LALCVLSVVLMSNSLSTIEIV), 203–223 (ILGWNIWRQPVGFIAFVISAL), 253–273 (FGLFYVASYLNLFASSLFVTI), 303–323 (GLIAFAITLSKAYLFLFASIL), and 343–363 (FLLPVALGNLLLTASFELALL).

Belongs to the complex I subunit 1 family. In terms of assembly, NDH is composed of at least 16 different subunits, 5 of which are encoded in the nucleus.

The protein localises to the plastid. Its subcellular location is the chloroplast thylakoid membrane. The catalysed reaction is a plastoquinone + NADH + (n+1) H(+)(in) = a plastoquinol + NAD(+) + n H(+)(out). It catalyses the reaction a plastoquinone + NADPH + (n+1) H(+)(in) = a plastoquinol + NADP(+) + n H(+)(out). NDH shuttles electrons from NAD(P)H:plastoquinone, via FMN and iron-sulfur (Fe-S) centers, to quinones in the photosynthetic chain and possibly in a chloroplast respiratory chain. The immediate electron acceptor for the enzyme in this species is believed to be plastoquinone. Couples the redox reaction to proton translocation, and thus conserves the redox energy in a proton gradient. The sequence is that of NAD(P)H-quinone oxidoreductase subunit 1, chloroplastic from Zygnema circumcarinatum (Green alga).